Here is a 569-residue protein sequence, read N- to C-terminus: Laccase-13 (569 aa).

Positions 1–21 (MEQLRPFFLLLAIFVASLVNA) are cleaved as a signal peptide. 2 consecutive Plastocyanin-like domains span residues 29 to 145 (VIQE…PPLS) and 157 to 308 (REIT…YKDA). N75 carries N-linked (GlcNAc...) asparagine glycosylation. The Cu cation site is built by H79, H81, H124, and H126. Residues N186, N296, N330, N381, N391, and N432 are each glycosylated (N-linked (GlcNAc...) asparagine). The Plastocyanin-like 3 domain occupies 418–553 (DFPPTPPVTF…AMVFLVENGE (136 aa)). H470, H473, H475, H532, C533, H534, and H538 together coordinate Cu cation.

The protein belongs to the multicopper oxidase family. It depends on Cu cation as a cofactor. As to expression, mostly expressed in roots. Also detected in leaves, stems and flowers but not in siliques.

The protein resides in the secreted. It localises to the extracellular space. Its subcellular location is the apoplast. It catalyses the reaction 4 hydroquinone + O2 = 4 benzosemiquinone + 2 H2O. Its function is as follows. Lignin degradation and detoxification of lignin-derived products. This is Laccase-13 (LAC13) from Arabidopsis thaliana (Mouse-ear cress).